The following is a 371-amino-acid chain: UDP-N-acetylglucosamine--N-acetylmuramyl-(pentapeptide) pyrophosphoryl-undecaprenol N-acetylglucosamine transferase (371 aa).

Residues threonine 15–glycine 17, asparagine 126, arginine 169, serine 197, and glutamine 298 contribute to the UDP-N-acetyl-alpha-D-glucosamine site.

The protein belongs to the glycosyltransferase 28 family. MurG subfamily.

Its subcellular location is the cell inner membrane. It catalyses the reaction di-trans,octa-cis-undecaprenyl diphospho-N-acetyl-alpha-D-muramoyl-L-alanyl-D-glutamyl-meso-2,6-diaminopimeloyl-D-alanyl-D-alanine + UDP-N-acetyl-alpha-D-glucosamine = di-trans,octa-cis-undecaprenyl diphospho-[N-acetyl-alpha-D-glucosaminyl-(1-&gt;4)]-N-acetyl-alpha-D-muramoyl-L-alanyl-D-glutamyl-meso-2,6-diaminopimeloyl-D-alanyl-D-alanine + UDP + H(+). It functions in the pathway cell wall biogenesis; peptidoglycan biosynthesis. Cell wall formation. Catalyzes the transfer of a GlcNAc subunit on undecaprenyl-pyrophosphoryl-MurNAc-pentapeptide (lipid intermediate I) to form undecaprenyl-pyrophosphoryl-MurNAc-(pentapeptide)GlcNAc (lipid intermediate II). In Paramagnetospirillum magneticum (strain ATCC 700264 / AMB-1) (Magnetospirillum magneticum), this protein is UDP-N-acetylglucosamine--N-acetylmuramyl-(pentapeptide) pyrophosphoryl-undecaprenol N-acetylglucosamine transferase.